The primary structure comprises 1109 residues: Myosin ID heavy chain (1109 aa).

A Myosin motor domain is found at 7–687; that stretch reads HGVDDMVMLS…TVFNLEELRE (681 aa). 101–108 contacts ATP; it reads GESGAGKT. The actin-binding stretch occupies residues 564 to 586; that stretch reads IGALVKALSACTPHYIRCIKPNG. The region spanning 725–919 is the TH1 domain; the sequence is KERRRLSIER…VSTPSDGLPA (195 aa). One can recognise an SH3 domain in the interval 958–1017; that stretch reads NVKPSAKALYDFDAESSMELSFKEGDILTVLDQSSGDWWDAELKGRRGKVPSNYLQLIKN. Positions 1017–1109 are disordered; that stretch reads NAAPPRAGGP…APRGGMAPRV (93 aa). A compositionally biased stretch (low complexity) spans 1030-1043; sequence TGNRAPTTTTTSGG.

Belongs to the TRAFAC class myosin-kinesin ATPase superfamily. Myosin family. As to quaternary structure, myosin I heavy chain is single-headed. Dimer of a heavy and a light chain. Inability to self-assemble into filaments.

It is found in the cell projection. The protein localises to the pseudopodium. It localises to the cytoplasm. Its subcellular location is the cell cortex. Functionally, myosin is a protein that binds to actin and has ATPase activity that is activated by actin. Myosin id may have a role in chemotaxis and aggregation; it could serve to stabilize and even retract cortical structures, such as pseudopods and lamellopods. Involved in the process of phagocytosis. The protein is Myosin ID heavy chain (myoD) of Dictyostelium discoideum (Social amoeba).